Here is a 344-residue protein sequence, read N- to C-terminus: Ubiquitin-associated domain-containing protein 2 (344 aa).

The first 34 residues, 1-34 (MFTSTGSNGLYKAPLSKSLLLVPSAISILLTLLF), serve as a signal peptide directing secretion. Residues 35–91 (QHYQKFFAYNLQAIKEDFQIWRLVCGRVICLDLKDTFCSSLLIYNFRIFERRYGSRK) are Extracellular-facing. The helical transmembrane segment at 92 to 111 (FSSFLLGAWTLSALFDLLLV) threads the bilayer. The Cytoplasmic segment spans residues 112–123 (EAAQYVFGITIN). The chain crosses the membrane as a helical span at residues 124–142 (SLPSGFLGPVFALFVPFYC). At 143–162 (SIPRVQVTQVLGYFSITNKT) the chain is on the extracellular side. Residue Asn160 is glycosylated (N-linked (GlcNAc...) asparagine). A helical membrane pass occupies residues 163–183 (LVYILGLQLLTSGSYIWILAL). Over 184-344 (SGLISGICYN…NVATNFLLQH (161 aa)) the chain is Cytoplasmic. The disordered stretch occupies residues 284 to 307 (RHNENYQDHHPSDQDTPPPTEVSE). The span at 286 to 296 (NENYQDHHPSD) shows a compositional bias: basic and acidic residues. A UBA domain is found at 304-344 (EVSEEQVARLMEMGFSRGDALEALRASNNDLNVATNFLLQH).

It localises to the endoplasmic reticulum membrane. Functionally, restricts trafficking of FAF2 from the endoplasmic reticulum to lipid droplets. May negatively regulate the canonical Wnt signaling pathway in the lymphocytes. The protein is Ubiquitin-associated domain-containing protein 2 (UBAC2) of Gallus gallus (Chicken).